Consider the following 317-residue polypeptide: Melanocyte-stimulating hormone receptor (317 aa).

Residues 1-37 lie on the Extracellular side of the membrane; it reads MPVLGSQRRLLGSLNCTPPATLPLTLAPNRTGPQCLE. An N-linked (GlcNAc...) asparagine glycan is attached at asparagine 29. The helical transmembrane segment at 38 to 63 threads the bilayer; it reads VSIPDGLFLSLGLVSLVENVLVVAAI. Residues 64–72 lie on the Cytoplasmic side of the membrane; it reads AKNRNLHSP. Residues 73–93 form a helical membrane-spanning segment; sequence MYYFICCLAMSDLLVSVSNVL. Residues 94–118 lie on the Extracellular side of the membrane; it reads ETAVMLLLEAGVLATRAAVVQQLDN. Residues 119–140 traverse the membrane as a helical segment; the sequence is VIDVLICSSMVSSLCFLGAIAV. Topologically, residues 141–163 are cytoplasmic; that stretch reads DRYISIFYALRYHSVVTLPRAWR. Residues 164–183 traverse the membrane as a helical segment; the sequence is IIAAIWVASILTSVLSITYY. At 184–191 the chain is on the extracellular side; it reads NHTVVLLC. The helical transmembrane segment at 192-211 threads the bilayer; that stretch reads LVGFFIAMLALMAVLYVHML. The Cytoplasmic portion of the chain corresponds to 212 to 240; the sequence is ARACQHARGIARLQKRQRPIHQGFGLKGA. Residues 241-266 form a helical membrane-spanning segment; sequence ATLTILLGVFFLCWGPFFLHLSLIVL. The Extracellular portion of the chain corresponds to 267-279; that stretch reads CPQHPTCGCIFKN. The chain crosses the membrane as a helical span at residues 280–300; that stretch reads FNLFLALIICNAIVDPLIYAF. Topologically, residues 301–317 are cytoplasmic; that stretch reads RSQELRKTLQEVLQCSW. Residue cysteine 315 is the site of S-palmitoyl cysteine attachment.

This sequence belongs to the G-protein coupled receptor 1 family. As to quaternary structure, interacts with MGRN1, but does not undergo MGRN1-mediated ubiquitination; this interaction competes with GNAS-binding and thus inhibits agonist-induced cAMP production. Interacts with OPN3; the interaction results in a decrease in MC1R-mediated cAMP signaling and ultimately a decrease in melanin production in melanocytes.

The protein localises to the cell membrane. Functionally, receptor for MSH (alpha, beta and gamma) and ACTH. The activity of this receptor is mediated by G proteins which activate adenylate cyclase. Mediates melanogenesis, the production of eumelanin (black/brown) and phaeomelanin (red/yellow), via regulation of cAMP signaling in melanocytes. In Ovis aries (Sheep), this protein is Melanocyte-stimulating hormone receptor (MC1R).